The following is a 145-amino-acid chain: Large-conductance mechanosensitive channel (145 aa).

Helical transmembrane passes span 14-34 (VMDL…VKSL), 38-58 (LIMP…YFLP), and 81-101 (GSFL…FLMV).

It belongs to the MscL family. In terms of assembly, homopentamer.

It is found in the cell inner membrane. Its function is as follows. Channel that opens in response to stretch forces in the membrane lipid bilayer. May participate in the regulation of osmotic pressure changes within the cell. The protein is Large-conductance mechanosensitive channel of Rhizobium johnstonii (strain DSM 114642 / LMG 32736 / 3841) (Rhizobium leguminosarum bv. viciae).